Reading from the N-terminus, the 129-residue chain is Acetophenone carboxylase beta subunit (129 aa).

Acetophenone carboxylase consists of five subunits; a heterooctameric subcomplex of two alpha (Apc1), two beta (Apc2), two gamma (Apc3) and two delta (Apc4) subunits assembles with the epsilon (Apc5) subunit in an unknown stoichiometry. The cofactor is Mg(2+). Requires Mn(2+) as cofactor.

It is found in the cytoplasm. It carries out the reaction acetophenone + hydrogencarbonate + 2 ATP + H2O = 3-oxo-3-phenylpropanoate + 2 ADP + 2 phosphate + 2 H(+). Its activity is regulated as follows. Inhibited by zinc ions, carbamoylphosphate and beta,gamma-imido-ATP. In terms of biological role, catalyzes the carboxylation of acetophenone to form 3-oxo-3-phenylpropanoate (benzoylacetate) in the anaerobic catabolism of ethylbenzene. Also carboxylates propiophenone at the same rate and 4-acetyl-pyridine at lower rates. The polypeptide is Acetophenone carboxylase beta subunit (apc2) (Aromatoleum aromaticum (strain DSM 19018 / LMG 30748 / EbN1) (Azoarcus sp. (strain EbN1))).